The chain runs to 86 residues: UPF0457 protein SAUSA300_2132 (86 aa).

This sequence belongs to the UPF0457 family.

The chain is UPF0457 protein SAUSA300_2132 from Staphylococcus aureus (strain USA300).